We begin with the raw amino-acid sequence, 274 residues long: NH(3)-dependent NAD(+) synthetase (274 aa).

46–53 (GISGGQDS) contributes to the ATP binding site. Residue Asp-52 participates in Mg(2+) binding. Residue Arg-140 participates in deamido-NAD(+) binding. An ATP-binding site is contributed by Thr-160. Glu-165 is a Mg(2+) binding site. The deamido-NAD(+) site is built by Lys-173 and Asp-180. ATP contacts are provided by Lys-189 and Thr-211. Position 260-261 (260-261 (HK)) interacts with deamido-NAD(+).

It belongs to the NAD synthetase family. As to quaternary structure, homodimer.

It carries out the reaction deamido-NAD(+) + NH4(+) + ATP = AMP + diphosphate + NAD(+) + H(+). It functions in the pathway cofactor biosynthesis; NAD(+) biosynthesis; NAD(+) from deamido-NAD(+) (ammonia route): step 1/1. Its function is as follows. Catalyzes the ATP-dependent amidation of deamido-NAD to form NAD. Uses ammonia as a nitrogen source. This chain is NH(3)-dependent NAD(+) synthetase, found in Streptococcus pyogenes serotype M1.